The primary structure comprises 474 residues: Glycogen synthase (474 aa).

K15 provides a ligand contact to ADP-alpha-D-glucose.

This sequence belongs to the glycosyltransferase 1 family. Bacterial/plant glycogen synthase subfamily.

It carries out the reaction [(1-&gt;4)-alpha-D-glucosyl](n) + ADP-alpha-D-glucose = [(1-&gt;4)-alpha-D-glucosyl](n+1) + ADP + H(+). The protein operates within glycan biosynthesis; glycogen biosynthesis. In terms of biological role, synthesizes alpha-1,4-glucan chains using ADP-glucose. The polypeptide is Glycogen synthase (Chlamydia trachomatis serovar A (strain ATCC VR-571B / DSM 19440 / HAR-13)).